Reading from the N-terminus, the 87-residue chain is U14-lycotoxin-Ls1a (87 aa).

Residues 1 to 20 form the signal peptide; sequence MNSKVFAVLLLLALSTCVLS. One can recognise a WAP domain in the interval 21–66; sequence EKYCPTPRNTSCKKMNIRNNCCRDSDCTSNAFCCAEPCGNFCHKAS. 5 cysteine pairs are disulfide-bonded: cysteine 24/cysteine 54, cysteine 32/cysteine 58, cysteine 41/cysteine 53, cysteine 42/cysteine 80, and cysteine 47/cysteine 62.

Belongs to the venom protein 11 family. 01 (wap-1) subfamily. Post-translationally, contains 5 disulfide bonds. In terms of tissue distribution, expressed by the venom gland.

The protein localises to the secreted. Functionally, has antibacterial activity. The polypeptide is U14-lycotoxin-Ls1a (Lycosa singoriensis (Wolf spider)).